A 295-amino-acid polypeptide reads, in one-letter code: Protoheme IX farnesyltransferase (295 aa).

The next 9 membrane-spanning stretches (helical) occupy residues 27–47, 48–68, 94–114, 117–137, 144–164, 171–191, 216–236, 241–261, and 272–292; these read LVVFTAIAGMVAAPGSIHPFL, ALISLMCIALGSGSAGAINMW, SALEFGITIGILSVFIMAIAV, ISAALLAVSILFYVFVYTIWL, NIVIGGAAGAFPPMIGWAVVT, SFILFLIIFMWTPPHFWALSL, KHILIYSILLVLTSLLPALFL, FYLSMAIIEGCVFIWFAISVI, and MFSYSISYLFSLFASIIFCSI.

Belongs to the UbiA prenyltransferase family. Protoheme IX farnesyltransferase subfamily.

It localises to the cell membrane. The catalysed reaction is heme b + (2E,6E)-farnesyl diphosphate + H2O = Fe(II)-heme o + diphosphate. The protein operates within porphyrin-containing compound metabolism; heme O biosynthesis; heme O from protoheme: step 1/1. Its function is as follows. Converts heme B (protoheme IX) to heme O by substitution of the vinyl group on carbon 2 of heme B porphyrin ring with a hydroxyethyl farnesyl side group. The sequence is that of Protoheme IX farnesyltransferase from Wolbachia pipientis subsp. Culex pipiens (strain wPip).